Here is a 134-residue protein sequence, read N- to C-terminus: Retinol-binding protein 2 (134 aa).

Residues Lys-41 and Gln-109 each coordinate all-trans-retinol.

Belongs to the calycin superfamily. Fatty-acid binding protein (FABP) family.

The protein resides in the cytoplasm. Intracellular transport of retinol. This is Retinol-binding protein 2 (Rbp2) from Rattus norvegicus (Rat).